The chain runs to 272 residues: Ribonuclease HII (272 aa).

Positions 30 to 221 constitute an RNase H type-2 domain; sequence GPVAGVDEVG…VRRAAEATGV (192 aa). A divalent metal cation is bound by residues D36, E37, and D130.

This sequence belongs to the RNase HII family. Requires Mn(2+) as cofactor. Mg(2+) serves as cofactor.

The protein localises to the cytoplasm. It carries out the reaction Endonucleolytic cleavage to 5'-phosphomonoester.. In terms of biological role, endonuclease that specifically degrades the RNA of RNA-DNA hybrids. The chain is Ribonuclease HII from Mycolicibacterium smegmatis (strain ATCC 700084 / mc(2)155) (Mycobacterium smegmatis).